Consider the following 296-residue polypeptide: Complex I intermediate-associated protein 30, mitochondrial (296 aa).

A mitochondrion-targeting transit peptide spans 1 to 29 (MNSLLRQGLRLGCCLPAVQQQIHTTAVHR).

This sequence belongs to the CIA30 family. In terms of assembly, associates with mitochondrial complex I assembly intermediates during its biogenesis.

Its subcellular location is the mitochondrion. Its function is as follows. Chaperone protein involved in the assembly of the mitochondrial NADH:ubiquinone oxidoreductase complex (complex I). The chain is Complex I intermediate-associated protein 30, mitochondrial from Drosophila melanogaster (Fruit fly).